A 338-amino-acid polypeptide reads, in one-letter code: RNA 3'-terminal phosphate cyclase (338 aa).

Residues Gln-103 and 283 to 287 (YLADQ) contribute to the ATP site. His-308 functions as the Tele-AMP-histidine intermediate in the catalytic mechanism.

It belongs to the RNA 3'-terminal cyclase family. Type 1 subfamily.

The protein localises to the cytoplasm. The catalysed reaction is a 3'-end 3'-phospho-ribonucleotide-RNA + ATP = a 3'-end 2',3'-cyclophospho-ribonucleotide-RNA + AMP + diphosphate. Its function is as follows. Catalyzes the conversion of 3'-phosphate to a 2',3'-cyclic phosphodiester at the end of RNA. The mechanism of action of the enzyme occurs in 3 steps: (A) adenylation of the enzyme by ATP; (B) transfer of adenylate to an RNA-N3'P to produce RNA-N3'PP5'A; (C) and attack of the adjacent 2'-hydroxyl on the 3'-phosphorus in the diester linkage to produce the cyclic end product. The biological role of this enzyme is unknown but it is likely to function in some aspects of cellular RNA processing. This Shigella sonnei (strain Ss046) protein is RNA 3'-terminal phosphate cyclase.